The sequence spans 275 residues: NH(3)-dependent NAD(+) synthetase (275 aa).

50 to 57 contributes to the ATP binding site; it reads GISGGVDS. Asp-56 contributes to the Mg(2+) binding site. Position 147 (Arg-147) interacts with deamido-NAD(+). Thr-167 is a binding site for ATP. Residue Glu-172 coordinates Mg(2+). 2 residues coordinate deamido-NAD(+): Lys-180 and Asp-187. Positions 196 and 218 each coordinate ATP. Residue 267 to 268 participates in deamido-NAD(+) binding; the sequence is HK.

This sequence belongs to the NAD synthetase family. Homodimer.

The catalysed reaction is deamido-NAD(+) + NH4(+) + ATP = AMP + diphosphate + NAD(+) + H(+). The protein operates within cofactor biosynthesis; NAD(+) biosynthesis; NAD(+) from deamido-NAD(+) (ammonia route): step 1/1. Its function is as follows. Catalyzes the ATP-dependent amidation of deamido-NAD to form NAD. Uses ammonia as a nitrogen source. The sequence is that of NH(3)-dependent NAD(+) synthetase from Pseudomonas putida (strain ATCC 700007 / DSM 6899 / JCM 31910 / BCRC 17059 / LMG 24140 / F1).